A 688-amino-acid chain; its full sequence is UvrABC system protein C (688 aa).

Residues 1–14 (MSPLDQKNKPRGGA) are compositionally biased toward basic and acidic residues. The disordered stretch occupies residues 1–20 (MSPLDQKNKPRGGADDLPPE). The region spanning 71 to 149 (NAPGVYRMMN…IKRLRPRFNV (79 aa)) is the GIY-YIG domain. The 36-residue stretch at 259-294 (QKVKTEISAAMQQASEDLDFERAAIYRDRLAALSHV) folds into the UVR domain.

It belongs to the UvrC family. As to quaternary structure, interacts with UvrB in an incision complex.

It localises to the cytoplasm. Its function is as follows. The UvrABC repair system catalyzes the recognition and processing of DNA lesions. UvrC both incises the 5' and 3' sides of the lesion. The N-terminal half is responsible for the 3' incision and the C-terminal half is responsible for the 5' incision. The polypeptide is UvrABC system protein C (Mesorhizobium japonicum (strain LMG 29417 / CECT 9101 / MAFF 303099) (Mesorhizobium loti (strain MAFF 303099))).